Here is a 233-residue protein sequence, read N- to C-terminus: tRNA (guanine-N(7)-)-methyltransferase (233 aa).

Residues glutamate 62, glutamate 87, aspartate 116, and aspartate 138 each coordinate S-adenosyl-L-methionine. The active site involves aspartate 138. Substrate is bound by residues lysine 142, aspartate 174, and 212-215 (TRYE).

The protein belongs to the class I-like SAM-binding methyltransferase superfamily. TrmB family.

It catalyses the reaction guanosine(46) in tRNA + S-adenosyl-L-methionine = N(7)-methylguanosine(46) in tRNA + S-adenosyl-L-homocysteine. Its pathway is tRNA modification; N(7)-methylguanine-tRNA biosynthesis. Functionally, catalyzes the formation of N(7)-methylguanine at position 46 (m7G46) in tRNA. The polypeptide is tRNA (guanine-N(7)-)-methyltransferase (Bartonella henselae (strain ATCC 49882 / DSM 28221 / CCUG 30454 / Houston 1) (Rochalimaea henselae)).